The sequence spans 217 residues: Uracil-DNA glycosylase (217 aa).

Asp-62 functions as the Proton acceptor in the catalytic mechanism.

It belongs to the uracil-DNA glycosylase (UDG) superfamily. UNG family.

It is found in the cytoplasm. It carries out the reaction Hydrolyzes single-stranded DNA or mismatched double-stranded DNA and polynucleotides, releasing free uracil.. Functionally, excises uracil residues from the DNA which can arise as a result of misincorporation of dUMP residues by DNA polymerase or due to deamination of cytosine. The protein is Uracil-DNA glycosylase of Streptococcus equi subsp. zooepidemicus (strain H70).